The chain runs to 347 residues: NADH-ubiquinone oxidoreductase chain 2 (347 aa).

The next 11 membrane-spanning stretches (helical) occupy residues 2–22 (SPYV…MTLI), 25–45 (HWLT…PLMT), 56–76 (AIKY…SAIF), 96–116 (FMMT…FWVP), 122–142 (IPLL…ISIF), 149–169 (LNMS…GWGG), 178–197 (ILAY…IMIY), 202–219 (ILNL…FMVL), 241–261 (MIII…TGFM), 278–298 (LAMM…RIIY), and 326–346 (IPTL…FITL).

This sequence belongs to the complex I subunit 2 family.

The protein localises to the mitochondrion inner membrane. It catalyses the reaction a ubiquinone + NADH + 5 H(+)(in) = a ubiquinol + NAD(+) + 4 H(+)(out). Functionally, core subunit of the mitochondrial membrane respiratory chain NADH dehydrogenase (Complex I) that is believed to belong to the minimal assembly required for catalysis. Complex I functions in the transfer of electrons from NADH to the respiratory chain. The immediate electron acceptor for the enzyme is believed to be ubiquinone. The polypeptide is NADH-ubiquinone oxidoreductase chain 2 (MT-ND2) (Didelphis virginiana (North American opossum)).